Reading from the N-terminus, the 444-residue chain is E1B 55 kDa protein (444 aa).

A disordered region spans residues methionine 1–valine 27. 2 positions are modified to phosphoserine: serine 438 and serine 439.

This sequence belongs to the adenoviridae E1B 55 kDa protein family. As to quaternary structure, interacts with host PML-4 and PML-5; this interaction promotes efficient subnuclear targeting of E1B-55K to PML nuclear bodies. Interacts with E4-ORF3 protein. Interacts with E4-ORF6 protein.

It localises to the host nucleus. The protein localises to the host cytoplasm. In terms of biological role, plays a major role to prevent cellular inhibition of viral genome replication. Assembles an SCF-like E3 ubiquitin ligase complex based on the cellular proteins ELOB, ELOC, CUL5 and RBX1, in cooperation with viral E4orf6. This viral RING-type ligase ubiquitinates cellular substrates and targets them to proteasomal degradation: TP53/p53, LIG4, MRE11-RAD50-NBS1 (MRN) complex, ITGA3, DAXX and BLM. E1B-55K probably acts as the substrate-specific adapter of the SCF-like E3 ubiquitin ligase complex. Degradation of host TP53/p53 activity is essential for preventing E1A-induced TP53 accumulation that would otherwise lead to cell apoptosis and growth arrest. E1B-55K also inactivates TP53 transcription-factor activity by binding its transactivation domain. E1B-55K also functions as a SUMO1 E3 ligase for TP53 which causes the latter to be sequestered in promyelocytic leukemia (PML) nuclear bodies thereby contributing to maximal inhibition of TP53 function. This Canis lupus familiaris (Dog) protein is E1B 55 kDa protein.